The following is a 163-amino-acid chain: MAQQNIEVPQLPIPGEDNSNRVPEQVVIGHPAAGVPPIPQQKSGMDLYFDQALDYMGDHPVLTGVGGFFALYFAAGAYKSVSKRLGGSSQGVKYLKGGFDPKMNAKEALAILNLNETNLSKKKLKEVHRRIMLANHPDKGGSPYLATKINEAKDFLEKKVVRK.

Residues 1-60 are Mitochondrial intermembrane-facing; sequence MAQQNIEVPQLPIPGEDNSNRVPEQVVIGHPAAGVPPIPQQKSGMDLYFDQALDYMGDHP. The helical transmembrane segment at 61-78 threads the bilayer; the sequence is VLTGVGGFFALYFAAGAY. Residues 79-163 lie on the Mitochondrial matrix side of the membrane; the sequence is KSVSKRLGGS…DFLEKKVVRK (85 aa). A J domain is found at 107 to 163; it reads EALAILNLNETNLSKKKLKEVHRRIMLANHPDKGGSPYLATKINEAKDFLEKKVVRK.

It belongs to the TIM14 family. Heterodimer with PAM16. Component of the PAM complex, at least composed of mtHsp70, MGE1, TIM44, PAM16, PAM17 and PAM18.

It is found in the mitochondrion inner membrane. Essential component of the PAM complex, a complex required for the translocation of transit peptide-containing proteins from the inner membrane into the mitochondrial matrix in an ATP-dependent manner. In the complex, it is required to stimulate activity of mtHSP70 (SSC1). In Kluyveromyces lactis (strain ATCC 8585 / CBS 2359 / DSM 70799 / NBRC 1267 / NRRL Y-1140 / WM37) (Yeast), this protein is Mitochondrial import inner membrane translocase subunit TIM14 (PAM18).